The following is a 292-amino-acid chain: Mitochondrial fission regulator 1-like (292 aa).

T30 is modified (phosphothreonine). The residue at position 41 (S41) is a Phosphoserine. Position 103 is a phosphoserine; by AMPK (S103). A phosphoserine mark is found at S110, S224, and S225. S238 carries the phosphoserine; by AMPK modification. Residues S261 and S273 each carry the phosphoserine modification.

Belongs to the MTFR1 family. Phosphorylated by AMPK. Upon stress, phosphorylation at Ser-103 and Ser-238 by AMPK is sufficient to induce mitochondrial fragmentation.

Its subcellular location is the mitochondrion outer membrane. Functionally, mitochondrial protein required for adaptation of miochondrial dynamics to metabolic changes. Regulates mitochondrial morphology at steady state and mediates AMPK-dependent stress-induced mitochondrial fragmentation via the control of OPA1 levels. The protein is Mitochondrial fission regulator 1-like of Homo sapiens (Human).